The chain runs to 130 residues: Small ribosomal subunit protein uS8 (130 aa).

It belongs to the universal ribosomal protein uS8 family. In terms of assembly, part of the 30S ribosomal subunit. Contacts proteins S5 and S12.

Functionally, one of the primary rRNA binding proteins, it binds directly to 16S rRNA central domain where it helps coordinate assembly of the platform of the 30S subunit. This Buchnera aphidicola subsp. Acyrthosiphon kondoi (Acyrthosiphon kondoi symbiotic bacterium) protein is Small ribosomal subunit protein uS8.